The following is a 239-amino-acid chain: Small ribosomal subunit protein eS1 (239 aa).

Positions 1 to 24 (MAIQPPGSYPQGNKKGKAKKKSGQ) are disordered.

Belongs to the eukaryotic ribosomal protein eS1 family. Component of the small ribosomal subunit. Mature ribosomes consist of a small (40S) and a large (60S) subunit. The 40S subunit contains about 33 different proteins and 1 molecule of RNA (18S). The 60S subunit contains about 49 different proteins and 3 molecules of RNA (25S, 5.8S and 5S).

The protein localises to the cytoplasm. This chain is Small ribosomal subunit protein eS1, found in Encephalitozoon cuniculi (strain GB-M1) (Microsporidian parasite).